The primary structure comprises 318 residues: 2-keto-3-deoxygluconate permease (318 aa).

Helical transmembrane passes span Ile-10–Pro-30, Gly-42–Ile-62, Val-76–Leu-96, Leu-105–Leu-125, Ala-139–Gly-159, Gly-162–Phe-182, Val-199–Ile-219, Phe-224–Ala-244, Thr-254–Ala-274, and Ala-289–Trp-309.

Belongs to the KdgT transporter family.

It localises to the cell inner membrane. It carries out the reaction 2-dehydro-3-deoxy-D-gluconate(in) + H(+)(in) = 2-dehydro-3-deoxy-D-gluconate(out) + H(+)(out). Functionally, catalyzes the proton-dependent uptake of 2-keto-3-deoxygluconate (KDG) into the cell. This chain is 2-keto-3-deoxygluconate permease, found in Pectobacterium atrosepticum (strain SCRI 1043 / ATCC BAA-672) (Erwinia carotovora subsp. atroseptica).